Reading from the N-terminus, the 753-residue chain is 5-methyltetrahydropteroyltriglutamate--homocysteine methyltransferase (753 aa).

5-methyltetrahydropteroyltri-L-glutamate contacts are provided by residues 17 to 20 and lysine 117; that span reads RELK. Residues 431–433 and glutamate 484 each bind L-homocysteine; that span reads IGS. Residues 431 to 433 and glutamate 484 each bind L-methionine; that span reads IGS. Residues 515–516 and tryptophan 561 each bind 5-methyltetrahydropteroyltri-L-glutamate; that span reads RC. Aspartate 599 contributes to the L-homocysteine binding site. Aspartate 599 lines the L-methionine pocket. Glutamate 605 provides a ligand contact to 5-methyltetrahydropteroyltri-L-glutamate. The Zn(2+) site is built by histidine 641, cysteine 643, and glutamate 665. Residue histidine 694 is the Proton donor of the active site. Cysteine 726 contributes to the Zn(2+) binding site.

This sequence belongs to the vitamin-B12 independent methionine synthase family. Requires Zn(2+) as cofactor.

It catalyses the reaction 5-methyltetrahydropteroyltri-L-glutamate + L-homocysteine = tetrahydropteroyltri-L-glutamate + L-methionine. Its pathway is amino-acid biosynthesis; L-methionine biosynthesis via de novo pathway; L-methionine from L-homocysteine (MetE route): step 1/1. Its function is as follows. Catalyzes the transfer of a methyl group from 5-methyltetrahydrofolate to homocysteine resulting in methionine formation. This chain is 5-methyltetrahydropteroyltriglutamate--homocysteine methyltransferase, found in Escherichia coli O7:K1 (strain IAI39 / ExPEC).